A 618-amino-acid polypeptide reads, in one-letter code: Proline--tRNA ligase (618 aa).

The protein belongs to the class-II aminoacyl-tRNA synthetase family. ProS type 1 subfamily. As to quaternary structure, homodimer.

It localises to the cytoplasm. The enzyme catalyses tRNA(Pro) + L-proline + ATP = L-prolyl-tRNA(Pro) + AMP + diphosphate. Catalyzes the attachment of proline to tRNA(Pro) in a two-step reaction: proline is first activated by ATP to form Pro-AMP and then transferred to the acceptor end of tRNA(Pro). As ProRS can inadvertently accommodate and process non-cognate amino acids such as alanine and cysteine, to avoid such errors it has two additional distinct editing activities against alanine. One activity is designated as 'pretransfer' editing and involves the tRNA(Pro)-independent hydrolysis of activated Ala-AMP. The other activity is designated 'posttransfer' editing and involves deacylation of mischarged Ala-tRNA(Pro). The misacylated Cys-tRNA(Pro) is not edited by ProRS. The chain is Proline--tRNA ligase from Streptococcus pyogenes serotype M28 (strain MGAS6180).